We begin with the raw amino-acid sequence, 236 residues long: 15,16-dihydrobiliverdin:ferredoxin oxidoreductase (236 aa).

This sequence belongs to the HY2 family.

It carries out the reaction 15,16-dihydrobiliverdin + oxidized 2[4Fe-4S]-[ferredoxin] = biliverdin IXalpha + reduced 2[4Fe-4S]-[ferredoxin] + 2 H(+). Functionally, catalyzes the two-electron reduction of biliverdin IX-alpha at the C15 methine bridge. This is 15,16-dihydrobiliverdin:ferredoxin oxidoreductase from Prochlorococcus marinus (strain MIT 9215).